The following is a 227-amino-acid chain: Cytochrome c oxidase subunit 2 (227 aa).

Residues 1–14 (MTHPLQLGFQDATS) are Mitochondrial intermembrane-facing. Residues 15–45 (PIMEELLHFHDHTLMIVFLISSLVLYIITLM) traverse the membrane as a helical segment. Residues 46-59 (LTTKLTHTSTMDAQ) lie on the Mitochondrial matrix side of the membrane. A helical membrane pass occupies residues 60 to 87 (EVETVWTILPAIILILIALPSLRILYMM). Residues 88-227 (DEINNPLLTV…YFEDWSVSMT (140 aa)) are Mitochondrial intermembrane-facing. Cu cation contacts are provided by H161, C196, E198, C200, H204, and M207. E198 serves as a coordination point for Mg(2+). Y218 carries the phosphotyrosine modification.

It belongs to the cytochrome c oxidase subunit 2 family. As to quaternary structure, component of the cytochrome c oxidase (complex IV, CIV), a multisubunit enzyme composed of 14 subunits. The complex is composed of a catalytic core of 3 subunits MT-CO1, MT-CO2 and MT-CO3, encoded in the mitochondrial DNA, and 11 supernumerary subunits COX4I, COX5A, COX5B, COX6A, COX6B, COX6C, COX7A, COX7B, COX7C, COX8 and NDUFA4, which are encoded in the nuclear genome. The complex exists as a monomer or a dimer and forms supercomplexes (SCs) in the inner mitochondrial membrane with NADH-ubiquinone oxidoreductase (complex I, CI) and ubiquinol-cytochrome c oxidoreductase (cytochrome b-c1 complex, complex III, CIII), resulting in different assemblies (supercomplex SCI(1)III(2)IV(1) and megacomplex MCI(2)III(2)IV(2)). Found in a complex with TMEM177, COA6, COX18, COX20, SCO1 and SCO2. Interacts with TMEM177 in a COX20-dependent manner. Interacts with COX20. Interacts with COX16. It depends on Cu cation as a cofactor.

Its subcellular location is the mitochondrion inner membrane. The catalysed reaction is 4 Fe(II)-[cytochrome c] + O2 + 8 H(+)(in) = 4 Fe(III)-[cytochrome c] + 2 H2O + 4 H(+)(out). Functionally, component of the cytochrome c oxidase, the last enzyme in the mitochondrial electron transport chain which drives oxidative phosphorylation. The respiratory chain contains 3 multisubunit complexes succinate dehydrogenase (complex II, CII), ubiquinol-cytochrome c oxidoreductase (cytochrome b-c1 complex, complex III, CIII) and cytochrome c oxidase (complex IV, CIV), that cooperate to transfer electrons derived from NADH and succinate to molecular oxygen, creating an electrochemical gradient over the inner membrane that drives transmembrane transport and the ATP synthase. Cytochrome c oxidase is the component of the respiratory chain that catalyzes the reduction of oxygen to water. Electrons originating from reduced cytochrome c in the intermembrane space (IMS) are transferred via the dinuclear copper A center (CU(A)) of subunit 2 and heme A of subunit 1 to the active site in subunit 1, a binuclear center (BNC) formed by heme A3 and copper B (CU(B)). The BNC reduces molecular oxygen to 2 water molecules using 4 electrons from cytochrome c in the IMS and 4 protons from the mitochondrial matrix. This chain is Cytochrome c oxidase subunit 2 (MT-CO2), found in Carlito syrichta (Philippine tarsier).